Consider the following 241-residue polypeptide: Major prion protein (241 aa).

The N-terminal stretch at M1–C15 is a signal peptide. The tract at residues K16 to Y31 is interaction with ADGRG6. The segment at K16–S223 is interaction with GRB2, ERI3 and SYN1. Positions R18–S101 are disordered. 5 tandem repeats follow at residues P44 to Q52, P53 to Q60, P61 to Q68, P69 to Q76, and P77 to Q84. The segment at P44–Q84 is 5 X 8 AA tandem repeats of P-H-G-G-G-W-G-Q. The segment covering Q45–T88 has biased composition (gly residues). 12 residues coordinate Cu(2+): H54, G55, G56, H62, G63, G64, H70, G71, G72, H78, G79, and G80. Basic residues predominate over residues Q91–S101. A disulfide bond links C172 and C207. Residues N174 and N190 are each glycosylated (N-linked (GlcNAc...) asparagine). The GPI-anchor amidated serine moiety is linked to residue S223. Residues S224 to I241 constitute a propeptide, removed in mature form.

It belongs to the prion family. As to quaternary structure, monomer and homodimer. Has a tendency to aggregate into amyloid fibrils containing a cross-beta spine, formed by a steric zipper of superposed beta-strands. Soluble oligomers may represent an intermediate stage on the path to fibril formation. Copper binding may promote oligomerization. Interacts with GRB2, APP, ERI3/PRNPIP and SYN1. Mislocalized cytosolically exposed PrP interacts with MGRN1; this interaction alters MGRN1 subcellular location and causes lysosomal enlargement. Interacts with APP. Interacts with KIAA1191. Interacts with ADGRG6.

The protein resides in the cell membrane. Its subcellular location is the golgi apparatus. Its primary physiological function is unclear. May play a role in neuronal development and synaptic plasticity. May be required for neuronal myelin sheath maintenance. May promote myelin homeostasis through acting as an agonist for ADGRG6 receptor. May play a role in iron uptake and iron homeostasis. Soluble oligomers are toxic to cultured neuroblastoma cells and induce apoptosis (in vitro). Association with GPC1 (via its heparan sulfate chains) targets PRNP to lipid rafts. Also provides Cu(2+) or Zn(2+) for the ascorbate-mediated GPC1 deaminase degradation of its heparan sulfate side chains. This chain is Major prion protein (PRNP), found in Mandrillus sphinx (Mandrill).